The sequence spans 301 residues: 3-methyl-2-oxobutanoate hydroxymethyltransferase (301 aa).

Low complexity predominate over residues 1–28; sequence MATSNSSDSSMSAEVPAPYGNGPANAPA. Residues 1–37 form a disordered region; that stretch reads MATSNSSDSSMSAEVPAPYGNGPANAPATPSDTAKKP. Mg(2+) contacts are provided by D82 and D121. 3-methyl-2-oxobutanoate contacts are provided by residues 82 to 83, D121, and K151; that span reads DS. Residue E153 coordinates Mg(2+). E219 serves as the catalytic Proton acceptor.

This sequence belongs to the PanB family. In terms of assembly, homodecamer; pentamer of dimers. The cofactor is Mg(2+).

Its subcellular location is the cytoplasm. The catalysed reaction is 3-methyl-2-oxobutanoate + (6R)-5,10-methylene-5,6,7,8-tetrahydrofolate + H2O = 2-dehydropantoate + (6S)-5,6,7,8-tetrahydrofolate. It participates in cofactor biosynthesis; (R)-pantothenate biosynthesis; (R)-pantoate from 3-methyl-2-oxobutanoate: step 1/2. In terms of biological role, catalyzes the reversible reaction in which hydroxymethyl group from 5,10-methylenetetrahydrofolate is transferred onto alpha-ketoisovalerate to form ketopantoate. The sequence is that of 3-methyl-2-oxobutanoate hydroxymethyltransferase from Arthrobacter sp. (strain FB24).